Reading from the N-terminus, the 193-residue chain is Large ribosomal subunit protein uL18 (193 aa).

It belongs to the universal ribosomal protein uL18 family. In terms of assembly, part of the 50S ribosomal subunit. Contacts the 5S and 23S rRNAs.

This is one of the proteins that bind and probably mediate the attachment of the 5S RNA into the large ribosomal subunit, where it forms part of the central protuberance. The polypeptide is Large ribosomal subunit protein uL18 (Methanosphaera stadtmanae (strain ATCC 43021 / DSM 3091 / JCM 11832 / MCB-3)).